The chain runs to 516 residues: GMP synthase [glutamine-hydrolyzing] (516 aa).

Residues 8–198 (KILILDFGSQ…VVNICGCDTL (191 aa)) enclose the Glutamine amidotransferase type-1 domain. The active-site Nucleophile is cysteine 84. Catalysis depends on residues histidine 172 and glutamate 174. The GMPS ATP-PPase domain maps to 199–391 (WNIENIIEND…LGLPYNMLYR (193 aa)). 226–232 (SGGVDSS) serves as a coordination point for ATP.

As to quaternary structure, homodimer.

It carries out the reaction XMP + L-glutamine + ATP + H2O = GMP + L-glutamate + AMP + diphosphate + 2 H(+). Its pathway is purine metabolism; GMP biosynthesis; GMP from XMP (L-Gln route): step 1/1. Functionally, catalyzes the synthesis of GMP from XMP. In Francisella tularensis subsp. holarctica (strain FTNF002-00 / FTA), this protein is GMP synthase [glutamine-hydrolyzing].